Reading from the N-terminus, the 639-residue chain is RNA polymerase II elongation factor ELL2 (639 aa).

Disordered stretches follow at residues 175–203, 291–326, 378–416, and 439–513; these read DTVP…SVSQ, LNPS…SDFI, PSTH…SFSQ, and PSSA…EGCT. A compositionally biased stretch (polar residues) spans 291–317; sequence LNPSQNASTSRSESPLCSSKDAASSPQ. Low complexity predominate over residues 378–401; the sequence is PSTHLPVSNPPQTVNSNSNSPSTP. Basic residues predominate over residues 457–469; it reads SHKKSKKKSKKHK. The span at 470–479 shows a compositional bias: basic and acidic residues; it reads EKDQIKKLDI. Residues 480–490 show a composition bias toward acidic residues; that stretch reads ETMEEKEEDLQ. Phosphoserine is present on residues serine 501 and serine 579. Positions 525–635 constitute an OCEL domain; it reads PDYLIKYIAI…LIGEFDQQQA (111 aa).

Belongs to the ELL/occludin family. In terms of assembly, component of the super elongation complex (SEC), at least composed of EAF1, EAF2, CDK9, MLLT3/AF9, AFF (AFF1 or AFF4), the P-TEFb complex and ELL (ELL, ELL2 or ELL3). Component of the little elongation complex (LEC), at least composed of ELL (ELL, ELL2 or ELL3), ZC3H8, ICE1 and ICE2. Interacts with AFF4; the interaction is direct and leads to stabilize ELL2 and prevent ELL2 ubiquitination. Interacts with EAF1 and EAF2. Post-translationally, ubiquitinated by SIAH1, leading to its degradation by the proteasome. Interaction with AFF4 stabilizes ELL2 and prevents ELL2 ubiquitination.

The protein localises to the nucleus. Elongation factor component of the super elongation complex (SEC), a complex required to increase the catalytic rate of RNA polymerase II transcription by suppressing transient pausing by the polymerase at multiple sites along the DNA. Component of the little elongation complex (LEC), a complex required to regulate small nuclear RNA (snRNA) gene transcription by RNA polymerase II and III. Plays a role in immunoglobulin secretion in plasma cells: directs efficient alternative mRNA processing, influencing both proximal poly(A) site choice and exon skipping, as well as immunoglobulin heavy chain (IgH) alternative processing. Probably acts by regulating histone modifications accompanying transition from membrane-specific to secretory IgH mRNA expression. In Mus musculus (Mouse), this protein is RNA polymerase II elongation factor ELL2 (Ell2).